Consider the following 475-residue polypeptide: UDP-N-acetylmuramate--L-alanine ligase (475 aa).

118–124 (GTHGKTT) contacts ATP.

The protein belongs to the MurCDEF family.

The protein resides in the cytoplasm. It catalyses the reaction UDP-N-acetyl-alpha-D-muramate + L-alanine + ATP = UDP-N-acetyl-alpha-D-muramoyl-L-alanine + ADP + phosphate + H(+). It participates in cell wall biogenesis; peptidoglycan biosynthesis. Cell wall formation. This Thermosynechococcus vestitus (strain NIES-2133 / IAM M-273 / BP-1) protein is UDP-N-acetylmuramate--L-alanine ligase.